Consider the following 422-residue polypeptide: Ornithine decarboxylase (422 aa).

At lysine 71 the chain carries N6-(pyridoxal phosphate)lysine. Residues serine 203, glycine 240, and 275–278 (EPGR) each bind pyridoxal 5'-phosphate. Substrate is bound at residue 331–332 (FD). Cysteine 359 functions as the Proton donor; shared with dimeric partner in the catalytic mechanism. Residue aspartate 360 participates in substrate binding. Pyridoxal 5'-phosphate is bound at residue tyrosine 388.

The protein belongs to the Orn/Lys/Arg decarboxylase class-II family. As to quaternary structure, homodimer. Only the dimer is catalytically active, as the active sites are constructed of residues from both monomers. Pyridoxal 5'-phosphate is required as a cofactor.

The enzyme catalyses L-ornithine + H(+) = putrescine + CO2. Its pathway is amine and polyamine biosynthesis; putrescine biosynthesis via L-ornithine pathway; putrescine from L-ornithine: step 1/1. Its activity is regulated as follows. Inhibited by antizyme (AZ) in response to polyamine levels. AZ inhibits the assembly of the functional homodimer by binding to ODC monomers and targeting them for ubiquitin-independent proteolytic destruction by the 26S proteasome. Its function is as follows. Catalyzes the first and rate-limiting step of polyamine biosynthesis that converts ornithine into putrescine, which is the precursor for the polyamines, spermidine and spermine. Polyamines are essential for cell proliferation and are implicated in cellular processes, ranging from DNA replication to apoptosis. This is Ornithine decarboxylase from Caenorhabditis elegans.